Here is a 35-residue protein sequence, read N- to C-terminus: Cupiennin-1a (35 aa).

Position 35 is a glutamic acid 1-amide (Glu-35).

Belongs to the cationic peptide 04 (cupiennin) family. 01 subfamily. As to quaternary structure, monomer. Interacts with CSTX-1 (AC P81694), CSTX-9 (AC P58604), and CSTX-13 (AC P83919). Expressed by the venom gland.

The protein localises to the secreted. In terms of biological role, has antimicrobial activity against B.subtilis, E.coli, E.faecalis, P.denitrificans, P.aeruginosa, P.putida, S.aureus, and S.epidermidis. Shows insecticidal and hemolytic activities. Probably acts by disturbing membrane function with its amphipathic structure. Synergistically increases the insecticidal activity of CSTX-1 (AC P81694), CSTX-9 (AC P58604), and CSTX-13 (AC P83919) by up to 65%. Also inhibits the formation of nitric oxide by neuronal nitric oxide synthase. This is Cupiennin-1a from Cupiennius salei (American wandering spider).